Consider the following 263-residue polypeptide: Endonuclease 8 (263 aa).

Catalysis depends on P2, which acts as the Schiff-base intermediate with DNA. E3 (proton donor) is an active-site residue. The active-site Proton donor; for beta-elimination activity is K53. The DNA site is built by Q70, R125, and N169. The segment at 229 to 263 (KVFHRDGEACERCGGIIEKTTLSSRPFYWCPHCQK) adopts an FPG-type zinc-finger fold. Residue R253 is the Proton donor; for delta-elimination activity of the active site.

Belongs to the FPG family. Zn(2+) is required as a cofactor.

The catalysed reaction is 2'-deoxyribonucleotide-(2'-deoxyribose 5'-phosphate)-2'-deoxyribonucleotide-DNA = a 3'-end 2'-deoxyribonucleotide-(2,3-dehydro-2,3-deoxyribose 5'-phosphate)-DNA + a 5'-end 5'-phospho-2'-deoxyribonucleoside-DNA + H(+). In terms of biological role, involved in base excision repair of DNA damaged by oxidation or by mutagenic agents. Acts as a DNA glycosylase that recognizes and removes damaged bases. Has a preference for oxidized pyrimidines, such as thymine glycol, 5,6-dihydrouracil and 5,6-dihydrothymine. Has AP (apurinic/apyrimidinic) lyase activity and introduces nicks in the DNA strand. Cleaves the DNA backbone by beta-delta elimination to generate a single-strand break at the site of the removed base with both 3'- and 5'-phosphates. The chain is Endonuclease 8 from Salmonella paratyphi A (strain AKU_12601).